Here is a 319-residue protein sequence, read N- to C-terminus: HTH-type transcriptional regulator YidZ (319 aa).

In terms of domain architecture, HTH lysR-type spans 8 to 65 (LDLNLLLCLQLLMQERSVTKAAKRMNVTPSAVSKSLAKLRAWFDDPLFVNSPLGLSPT). The segment at residues 25-44 (VTKAAKRMNVTPSAVSKSLA) is a DNA-binding region (H-T-H motif).

This sequence belongs to the LysR transcriptional regulatory family.

Functionally, involved in anaerobic NO protection. The protein is HTH-type transcriptional regulator YidZ of Escherichia coli O6:H1 (strain CFT073 / ATCC 700928 / UPEC).